The primary structure comprises 429 residues: Autophagy-related protein 18 (429 aa).

7 WD repeats span residues 1-36, 69-114, 139-182, 185-225, 230-269, 309-355, and 367-407; these read MAMNFVTFNQDYSYLAVATSKGFRIFTTDPFAKSYE, KRQS…LLYT, PLPQ…AINV, AHRS…KLYQ, SMPSRIFSMSFNTTSTLLCVSSSTETIHLFKLSHPTSSPD, KHNG…AWFK, and VNNG…GGEG. The L/FRRG motif signature appears at 226 to 230; that stretch reads FRRGS. Residues 262–275 are compositionally biased toward low complexity; that stretch reads SHPTSSPDASPSSP. The tract at residues 262–308 is disordered; it reads SHPTSSPDASPSSPVGRDRSLSQSSSGYSPDRGDLTGDVGSSDFPAR.

This sequence belongs to the WD repeat PROPPIN family. In terms of assembly, component of the PI(3,5)P2 regulatory complex.

It is found in the preautophagosomal structure membrane. Its subcellular location is the vacuole membrane. It localises to the endosome membrane. The PI(3,5)P2 regulatory complex regulates both the synthesis and turnover of phosphatidylinositol 3,5-bisphosphate (PtdIns(3,5)P2). Necessary for proper vacuole morphology. Plays an important role in osmotically-induced vacuole fragmentation. Required for cytoplasm to vacuole transport (Cvt) vesicle formation, pexophagy and starvation-induced autophagy. Involved in correct atg9 trafficking to the pre-autophagosomal structure. Might also be involved in premeiotic DNA replication. The sequence is that of Autophagy-related protein 18 (atg18) from Neosartorya fischeri (strain ATCC 1020 / DSM 3700 / CBS 544.65 / FGSC A1164 / JCM 1740 / NRRL 181 / WB 181) (Aspergillus fischerianus).